We begin with the raw amino-acid sequence, 1777 residues long: Fatty acid synthase subunit alpha (1777 aa).

The interval 101-124 (APVESADNEPAQPAASSTPAAPAP) is disordered. A compositionally biased stretch (low complexity) spans 110-120 (PAQPAASSTPA). One can recognise a Carrier domain in the interval 151–237 (LSAIDVVISI…KVMGGHIDRL (87 aa)). Position 186 is an O-(pantetheine 4'-phosphoryl)serine (S186). The segment at 563 to 803 (FTGRRVLVTG…ILSLLSGDIL (241 aa)) is ketoreductase (KR) domain. The 533-residue stretch at 1007 to 1539 (KEIMHEVVID…QKGGLVVGIA (533 aa)) folds into the Ketosynthase family 3 (KS3) domain. Catalysis depends on for beta-ketoacyl synthase activity residues C1193, H1424, and H1465. Position 1661 (D1661) interacts with Mg(2+). Residues 1661–1663 (DIE), 1706–1716 (EAIFKSLQIPS), 1730–1734 (SNGAQ), and 1760–1762 (ITH) each bind acetyl-CoA.

The protein belongs to the thiolase-like superfamily. Fungal fatty acid synthetase subunit alpha family. As to quaternary structure, fatty acid synthase is composed of alpha and beta subunits.

It carries out the reaction acetyl-CoA + n malonyl-CoA + 2n NADPH + 4n H(+) = a long-chain-acyl-CoA + n CoA + n CO2 + 2n NADP(+).. The catalysed reaction is a fatty acyl-[ACP] + malonyl-[ACP] + H(+) = a 3-oxoacyl-[ACP] + holo-[ACP] + CO2. It catalyses the reaction a (3R)-hydroxyacyl-[ACP] + NADP(+) = a 3-oxoacyl-[ACP] + NADPH + H(+). It participates in secondary metabolite biosynthesis. Functionally, fatty acid synthase alpha subunit; part of the gene cluster that mediates the biosynthesis of oryzines, natural products with an unusual maleidride backbone. The two subunits of the fungal fatty acid synthase oryfasA and oryfasB probably form octenoic acid. This fatty acid is most likely activated by the acyl-CoA ligase oryP to give octenyl-CoA before the citrate synthase-like protein oryE catalyzes condensation with oxaloacetate to form tricarboxylic acid. The next steps of the pathways are conjectural, but a favorite possible route has been proposed, beginning with decarboxylation and concomitant dehydration by the decarboxylase oryM, followed by tautomerization, which may lead to the production of a diene intermediate. Reduction of this diene intermediate could give the known metabolite piliformic acid. On the pathway to oryzine B and oryzine A, however, hydroxylation of the diene by the alpha-ketoglutarate-dependent dioxygenase oryG and lactonisation by the lactonohydrolases oryH or oryL could give oryzine B directly. Finally, enoyl reduction by the dehydrogenase oryD would then convert oryzine B into oryzine A. The sequence is that of Fatty acid synthase subunit alpha from Aspergillus oryzae (strain ATCC 42149 / RIB 40) (Yellow koji mold).